The chain runs to 232 residues: MILAANFKMNHTRASTKAYIERLNAYGKQTDIDIAVFPPATALDQYETFADIGAQNAYAAEHGSFTGEIGLQQLQEFGIETVLLGHSERRHIFYESQEMIARKFAFYKERGFTIYYCLGETLQTRKKGFEAIRELLQSQLEGIDTAYENFVIAYEPVWAIGTGVAAKPEEIEEVLAYLASLTDAPLLYGGSVKPANIKEVLSIPKCDGALIGTASWDVENFIKMIEIAKEMR.

Residue 6 to 8 (NFK) coordinates substrate. The active-site Electrophile is histidine 86. Glutamate 155 serves as the catalytic Proton acceptor. Substrate-binding residues include glycine 161 and serine 191.

This sequence belongs to the triosephosphate isomerase family. Homodimer.

The protein localises to the cytoplasm. The enzyme catalyses D-glyceraldehyde 3-phosphate = dihydroxyacetone phosphate. Its pathway is carbohydrate biosynthesis; gluconeogenesis. It functions in the pathway carbohydrate degradation; glycolysis; D-glyceraldehyde 3-phosphate from glycerone phosphate: step 1/1. Involved in the gluconeogenesis. Catalyzes stereospecifically the conversion of dihydroxyacetone phosphate (DHAP) to D-glyceraldehyde-3-phosphate (G3P). The sequence is that of Triosephosphate isomerase from Nitratiruptor sp. (strain SB155-2).